Here is a 196-residue protein sequence, read N- to C-terminus: Small ribosomal subunit protein uS4c (196 aa).

Residues 89–150 enclose the S4 RNA-binding domain; that stretch reads MRLDNIVFRL…NQRSKRLVQN (62 aa).

This sequence belongs to the universal ribosomal protein uS4 family. As to quaternary structure, part of the 30S ribosomal subunit. Contacts protein S5. The interaction surface between S4 and S5 is involved in control of translational fidelity.

It is found in the plastid. It localises to the chloroplast. Its function is as follows. One of the primary rRNA binding proteins, it binds directly to 16S rRNA where it nucleates assembly of the body of the 30S subunit. In terms of biological role, with S5 and S12 plays an important role in translational accuracy. This is Small ribosomal subunit protein uS4c (rps4) from Eleusine indica (Goosegrass).